A 312-amino-acid polypeptide reads, in one-letter code: Bifunctional pinoresinol-lariciresinol reductase (312 aa).

NADP(+)-binding positions include 10-16 (GGTGYIG), R35, and K44. K136 serves as the catalytic Proton acceptor. Residue R140 coordinates NADP(+). H268 is a substrate binding site.

The protein belongs to the NmrA-type oxidoreductase family. Isoflavone reductase subfamily. As to quaternary structure, dimer. As to expression, expressed in seed coats, but not in embryos, leaves, stems and roots.

Reductase involved in lignan biosynthesis. Catalyzes the sequential conversion of pinoresinol into lariciresinol and of lariciresinol into secoisolariciresinol. Abstracts the 4R-hydride from the NADPH cofactor during catalysis. The polypeptide is Bifunctional pinoresinol-lariciresinol reductase (Linum usitatissimum (Flax)).